Reading from the N-terminus, the 212-residue chain is Ras-related protein Rab-2A (212 aa).

At A2 the chain carries N-acetylalanine. The tract at residues 2–19 is required for interaction with PRKCI; the sequence is AYAYLFKYIIIGDTGVGK. GTP is bound by residues G16, V17, G18, K19, S20, C21, and T38. S20 contributes to the Mg(2+) binding site. A Switch 1 motif is present at residues 37-42; it reads LTIGVE. 2 residues coordinate Mg(2+): T38 and D61. The Switch 2 motif lies at 63 to 72; that stretch reads AGQESFRSIT. GTP is bound by residues G64, N119, K120, D122, A150, and K151. S-geranylgeranyl cysteine attachment occurs at residues C211 and C212.

It belongs to the small GTPase superfamily. Rab family. In terms of assembly, interacts with PRKCI. Interacts with TRIP11. Interacts (in GTP-bound form) with GARIN1B. Interacts (GTP-bound) with HOPS complex component VPS39; interaction contributes to obtaining a functional HOPS complex that promotes autophagosome-lysosome membrane fusion driven by STX17-SNAP29-VAMP8. May interact with VPS41. The cofactor is Mg(2+). Post-translationally, prenylated. Prenylation is required for association with cellular membranes.

It is found in the endoplasmic reticulum-Golgi intermediate compartment membrane. The protein resides in the melanosome. It localises to the endoplasmic reticulum membrane. Its subcellular location is the golgi apparatus membrane. The protein localises to the cytoplasmic vesicle. It is found in the secretory vesicle. The protein resides in the acrosome. It localises to the autophagosome membrane. It carries out the reaction GTP + H2O = GDP + phosphate + H(+). Regulated by guanine nucleotide exchange factors (GEFs) which promote the exchange of bound GDP for free GTP, GTPase activating proteins (GAPs) which increase the GTP hydrolysis activity, and GDP dissociation inhibitors (GDIs) which inhibit the dissociation of the nucleotide from the GTPase. In terms of biological role, the small GTPases Rab are key regulators of intracellular membrane trafficking, from the formation of transport vesicles to their fusion with membranes. Rabs cycle between active GTP-bound and inactive GDP-bound states. In their active state, drive transport of vesicular carriers from donor organelles to acceptor organelles to regulate the membrane traffic that maintains organelle identity and morphology. RAB2A regulates autophagy by promoting autophagosome-lysosome fusion via recruitment of the HOPS endosomal tethering complex; this process involves autophagosomal RAB2A and lysosomal RAB39A recruitment of HOPS subcomplexes VPS39-VPS11 and VPS41-VPS16-VPS18-VPS33A, respectively, which assemble into a functional complex to mediate membrane tethering and SNAREs-driven membrane fusion. Required for protein transport from the endoplasmic reticulum to the Golgi complex. Regulates the compacted morphology of the Golgi. Together with RAB2B, redundantly required for efficient autophagic flux. The sequence is that of Ras-related protein Rab-2A (RAB2A) from Canis lupus familiaris (Dog).